The following is a 557-amino-acid chain: Formate--tetrahydrofolate ligase 1 (557 aa).

Residue 66–73 coordinates ATP; it reads TPAGEGKT.

It belongs to the formate--tetrahydrofolate ligase family.

The catalysed reaction is (6S)-5,6,7,8-tetrahydrofolate + formate + ATP = (6R)-10-formyltetrahydrofolate + ADP + phosphate. It participates in one-carbon metabolism; tetrahydrofolate interconversion. The sequence is that of Formate--tetrahydrofolate ligase 1 from Streptococcus sanguinis (strain SK36).